Reading from the N-terminus, the 291-residue chain is Trimeric intracellular cation channel type B (291 aa).

Residues 1-15 (MESPWNELTLAFSRT) lie on the Lumenal side of the membrane. The chain crosses the membrane as a helical span at residues 16–33 (SMFPFFDIAHYLVSVMAL). Residues 34-47 (KHQPGAAALAWKNP) lie on the Cytoplasmic side of the membrane. The chain crosses the membrane as a helical span at residues 48 to 69 (LSSWFTAMLHCFGGGILSCVLL). Residues 70–80 (AEPPLRFLANN) lie on the Lumenal side of the membrane. A helical membrane pass occupies residues 81–100 (TNILLASSIWYIAFFCPCDL). Residues 101-103 (ISQ) lie on the Cytoplasmic side of the membrane. The helical transmembrane segment at 104–122 (AYSFLPVQLLAAGMKEVTR) threads the bilayer. Residues lysine 118 and arginine 122 each coordinate a 1,2-diacyl-sn-glycero-3-phospho-(1D-myo-inositol-4,5-bisphosphate). The Lumenal portion of the chain corresponds to 123–138 (TWKIVGGVTHANSYYK). The chain crosses the membrane as a helical span at residues 139–156 (NGWIVMIAVGWARGAGGS). The Cytoplasmic segment spans residues 157–179 (IITNFEQLVKGCWKPEAEEWLKM). Residues 180–196 (SYPAKVTLLGSVIFTFQ) form a helical membrane-spanning segment. Topologically, residues 197 to 207 (QTKYLAISKHN) are lumenal. Residues 208–225 (LMFLFTVFLVATKITMMI) form a helical membrane-spanning segment. At 226-291 (TKTALVPFAC…VKKKHSKKTE (66 aa)) the chain is on the cytoplasmic side. Residues 257–291 (KSETKSSFNGTGSSTSKPVANASDKVKKKHSKKTE) form a disordered region. Residues 261 to 274 (KSSFNGTGSSTSKP) show a composition bias toward polar residues. Position 262 is a phosphoserine (serine 262). Residues 282 to 291 (VKKKHSKKTE) show a composition bias toward basic residues.

Belongs to the TMEM38 family. In terms of assembly, homotrimer; conformation seems to be controled by binding to diacylglycerol (DAG).

The protein localises to the endoplasmic reticulum membrane. It catalyses the reaction K(+)(in) = K(+)(out). Channel activity is activated by increased cytosolic Ca(2+) levels and blocked by luminal high Ca(2+) levels. Its function is as follows. Intracellular monovalent cation channel required for maintenance of rapid intracellular calcium release. Acts as a potassium counter-ion channel that functions in synchronization with calcium release from intracellular stores. Activated by increased cytosolic Ca(2+) levels. The sequence is that of Trimeric intracellular cation channel type B (TMEM38B) from Bos taurus (Bovine).